Consider the following 71-residue polypeptide: MFTMKKSLLLFFFLGTISLSLCEQERGADEDDGVEITEEEVKRGLMDTVKNVAKNLAGHMLDKLKCKITGC.

The first 20 residues, 1–20, serve as a signal peptide directing secretion; it reads MFTMKKSLLLFFFLGTISLS. Residues 21–44 constitute a propeptide that is removed on maturation; it reads LCEQERGADEDDGVEITEEEVKRG. Residues cysteine 66 and cysteine 71 are joined by a disulfide bond.

Expressed by the skin glands.

The protein resides in the secreted. Functionally, antibacterial activity against Gram-positive bacterium S.aureus and Gram-negative bacterium E.coli. Has activity against C.albicans. This chain is Ranatuerin-2P, found in Lithobates pipiens (Northern leopard frog).